Reading from the N-terminus, the 597-residue chain is Arginine--tRNA ligase (597 aa).

Positions 125–135 (PNTNKPLHLGH) match the 'HIGH' region motif.

This sequence belongs to the class-I aminoacyl-tRNA synthetase family. Monomer.

The protein resides in the cytoplasm. The catalysed reaction is tRNA(Arg) + L-arginine + ATP = L-arginyl-tRNA(Arg) + AMP + diphosphate. The sequence is that of Arginine--tRNA ligase from Porphyromonas gingivalis (strain ATCC BAA-308 / W83).